A 134-amino-acid chain; its full sequence is Profilin-2 (134 aa).

A disulfide bridge connects residues Cys13 and Cys118. Positions 84–100 (AVIRGKKGSGGITIKKT) match the Involved in PIP2 interaction motif. The residue at position 114 (Thr114) is a Phosphothreonine.

The protein belongs to the profilin family. Occurs in many kinds of cells as a complex with monomeric actin in a 1:1 ratio. Phosphorylated by MAP kinases.

It is found in the cytoplasm. Its subcellular location is the cytoskeleton. Binds to actin and affects the structure of the cytoskeleton. At high concentrations, profilin prevents the polymerization of actin, whereas it enhances it at low concentrations. The chain is Profilin-2 from Olea europaea (Common olive).